Consider the following 314-residue polypeptide: 4-hydroxy-3-methylbut-2-enyl diphosphate reductase (314 aa).

Cys-18 contributes to the [4Fe-4S] cluster binding site. (2E)-4-hydroxy-3-methylbut-2-enyl diphosphate contacts are provided by His-47 and His-80. Dimethylallyl diphosphate is bound by residues His-47 and His-80. The isopentenyl diphosphate site is built by His-47 and His-80. Cys-102 lines the [4Fe-4S] cluster pocket. His-130 lines the (2E)-4-hydroxy-3-methylbut-2-enyl diphosphate pocket. A dimethylallyl diphosphate-binding site is contributed by His-130. Position 130 (His-130) interacts with isopentenyl diphosphate. Glu-132 (proton donor) is an active-site residue. Residue Thr-171 coordinates (2E)-4-hydroxy-3-methylbut-2-enyl diphosphate. A [4Fe-4S] cluster-binding site is contributed by Cys-201. (2E)-4-hydroxy-3-methylbut-2-enyl diphosphate-binding residues include Ser-229, Ser-230, Asn-231, and Ser-273. Positions 229, 230, 231, and 273 each coordinate dimethylallyl diphosphate. Isopentenyl diphosphate contacts are provided by Ser-229, Ser-230, Asn-231, and Ser-273.

The protein belongs to the IspH family. [4Fe-4S] cluster serves as cofactor.

The catalysed reaction is isopentenyl diphosphate + 2 oxidized [2Fe-2S]-[ferredoxin] + H2O = (2E)-4-hydroxy-3-methylbut-2-enyl diphosphate + 2 reduced [2Fe-2S]-[ferredoxin] + 2 H(+). The enzyme catalyses dimethylallyl diphosphate + 2 oxidized [2Fe-2S]-[ferredoxin] + H2O = (2E)-4-hydroxy-3-methylbut-2-enyl diphosphate + 2 reduced [2Fe-2S]-[ferredoxin] + 2 H(+). Its pathway is isoprenoid biosynthesis; dimethylallyl diphosphate biosynthesis; dimethylallyl diphosphate from (2E)-4-hydroxy-3-methylbutenyl diphosphate: step 1/1. It functions in the pathway isoprenoid biosynthesis; isopentenyl diphosphate biosynthesis via DXP pathway; isopentenyl diphosphate from 1-deoxy-D-xylulose 5-phosphate: step 6/6. Functionally, catalyzes the conversion of 1-hydroxy-2-methyl-2-(E)-butenyl 4-diphosphate (HMBPP) into a mixture of isopentenyl diphosphate (IPP) and dimethylallyl diphosphate (DMAPP). Acts in the terminal step of the DOXP/MEP pathway for isoprenoid precursor biosynthesis. The sequence is that of 4-hydroxy-3-methylbut-2-enyl diphosphate reductase from Phenylobacterium zucineum (strain HLK1).